The sequence spans 545 residues: Tripartite motif-containing protein 26 (545 aa).

The RING-type zinc finger occupies 16–57; the sequence is CSICLDYLRDPVTIDCGHVFCRSCTSDIRPISGNRPVCPLCK. The B box-type zinc-finger motif lies at 97–138; the sequence is QDMKLCERHQEKLHYYCEDDGKLLCVMCRESREHRPHTAVLV. Positions 102, 105, 124, and 130 each coordinate Zn(2+). The stretch at 197–243 forms a coiled coil; it reads QFLKKREQHLLDQLATLEQLLTEGREKFKTRGVSELDRLTLVISELE. The region spanning 301-545 is the B30.2/SPRY domain; it reads RGLRQFQGKL…WPGARLLLRP (245 aa). Residues 382 to 443 are disordered; that stretch reads REGWSEDEEE…EEEEEVQESC (62 aa). Over residues 386-440 the composition is skewed to acidic residues; it reads SEDEEEGEEEEEGEEEEEDEEVGYGDGYEDWETDEEDESLGEEEEEEEEEEEEVQ.

The protein belongs to the TRIM/RBCC family. Interacts with TBK1; this interaction bridges together TBK1 and NEMO in order to activate TBK1. Interacts with INCA1. Post-translationally, autoubiquitinates upon viral infection. In turn, autoubiquitinated TRIM26 recruits NEMO and bridges TBK1-NEMO interaction.

Its subcellular location is the cytoplasm. The protein resides in the nucleus. The catalysed reaction is S-ubiquitinyl-[E2 ubiquitin-conjugating enzyme]-L-cysteine + [acceptor protein]-L-lysine = [E2 ubiquitin-conjugating enzyme]-L-cysteine + N(6)-ubiquitinyl-[acceptor protein]-L-lysine.. Its function is as follows. E3 ubiquitin-protein ligase which regulates the IFN-beta production and antiviral response downstream of various DNA-encoded pattern-recognition receptors (PRRs). Also plays a central role in determining the response to different forms of oxidative stress by controlling levels of DNA glycosylases NEIL1, NEIL3 and NTH1 that are involved in repair of damaged DNA. Promotes nuclear IRF3 ubiquitination and proteasomal degradation. Bridges together TBK1 and NEMO during the innate response to viral infection leading to the activation of TBK1. Positively regulates LPS-mediated inflammatory innate immune response by catalyzing the 'Lys-11'-linked polyubiquitination of TAB1 to enhance its activation and subsequent NF-kappa-B and MAPK signaling. In a manner independent of its catalytic activity, inhibits WWP2, a SOX2-directed E3 ubiquitin ligase, and thus protects SOX2 from polyubiquitination and proteasomal degradation. Ubiquitinates the histone acetyltransferase protein complex component PHF20 and thereby triggers its degradation in the nucleus after its recruitment by the histone demethylase KDM6B, serving as a scaffold protein. Upon induction by TGF-beta, ubiquitinates the TFIID component TAF7 for proteasomal degradation. Induces ferroptosis by ubiquitinating SLC7A11, a critical protein for lipid reactive oxygen species (ROS) scavenging. In Mus musculus (Mouse), this protein is Tripartite motif-containing protein 26 (Trim26).